The chain runs to 687 residues: Variant-specific surface protein VSP4A1 (687 aa).

Residues 1 to 14 (MLLTAFYVVLGSFA) form the signal peptide. Topologically, residues 15–660 (APCQQDGDHI…SGLSTGAIAG (646 aa)) are extracellular. The helical transmembrane segment at 661–681 (ISVAAIVVVGGLVGFLCWWFI) threads the bilayer. Over 682–687 (CRGKAQ) the chain is Cytoplasmic.

This sequence belongs to the Giardia variant surface protein family. Post-translationally, O-glycosylated. The major glycan is a trisaccharide with Glc at the reducing terminus. In terms of processing, palmitoylated.

Its subcellular location is the cell membrane. In Giardia intestinalis (Giardia lamblia), this protein is Variant-specific surface protein VSP4A1.